The following is a 187-amino-acid chain: MILLIDNYDSFTWNLYQYFCELGADVLVKRNDALTLADIDALKPQKIVISPGPCTPDEAGISLDVIRHYAGRLPILGVCLGHQAMAQAFGGKVVRAAKVMHGKTSPITHNGEGVFRGLANPLTVTRYHSLVVEPDSLPACFDVTAWSETREIMGIRHRQWDLEGVQFHPESILSEQGHQLLANFLHR.

Residues 1-187 form the Glutamine amidotransferase type-1 domain; the sequence is MILLIDNYDS…HQLLANFLHR (187 aa). Active-site residues include C79, H168, and E170.

Monomer. Heterodimer consisting of two non-identical subunits: a glutamine amidotransferase subunit (PabA) and a aminodeoxychorismate synthase subunit (PabB).

The enzyme catalyses chorismate + L-glutamine = 4-amino-4-deoxychorismate + L-glutamate. It functions in the pathway cofactor biosynthesis; tetrahydrofolate biosynthesis; 4-aminobenzoate from chorismate: step 1/2. With respect to regulation, inhibited by 6-diazo-5-oxo-L-norleucine (DON). The inhibition is competitive with glutamine, but uncompetitive with chorismate. Functionally, part of a heterodimeric complex that catalyzes the two-step biosynthesis of 4-amino-4-deoxychorismate (ADC), a precursor of p-aminobenzoate (PABA) and tetrahydrofolate. In the first step, a glutamine amidotransferase (PabA) generates ammonia as a substrate that, along with chorismate, is used in the second step, catalyzed by aminodeoxychorismate synthase (PabB) to produce ADC. PabA converts glutamine into glutamate only in the presence of stoichiometric amounts of PabB. This Escherichia coli (strain K12) protein is Aminodeoxychorismate synthase component 2.